Here is an 85-residue protein sequence, read N- to C-terminus: Large ribosomal subunit protein bL27 (85 aa).

The tract at residues 1–21 is disordered; sequence MAHKKAGGSTRNGRDSEGKRL.

It belongs to the bacterial ribosomal protein bL27 family.

The polypeptide is Large ribosomal subunit protein bL27 (Hamiltonella defensa subsp. Acyrthosiphon pisum (strain 5AT)).